Here is a 129-residue protein sequence, read N- to C-terminus: MSDSIFPINPDAALAIHVALSAGIVAAIIVVAALLREKRAGARPDVPYEGGVLPAAPQQGPINAPYFLIAALFVIFDMEVAILFAWAVAARDTGWFGLIEAAVFIGVLLLALVYLWADGALDWHKERKR.

3 helical membrane passes run 14 to 34, 67 to 87, and 95 to 115; these read LAIH…VAAL, FLIA…FAWA, and WFGL…LVYL.

This sequence belongs to the complex I subunit 3 family. NDH-1 is composed of 14 different subunits. Subunits NuoA, H, J, K, L, M, N constitute the membrane sector of the complex.

It localises to the cell inner membrane. It catalyses the reaction a quinone + NADH + 5 H(+)(in) = a quinol + NAD(+) + 4 H(+)(out). Functionally, NDH-1 shuttles electrons from NADH, via FMN and iron-sulfur (Fe-S) centers, to quinones in the respiratory chain. The immediate electron acceptor for the enzyme in this species is believed to be ubiquinone. Couples the redox reaction to proton translocation (for every two electrons transferred, four hydrogen ions are translocated across the cytoplasmic membrane), and thus conserves the redox energy in a proton gradient. The polypeptide is NADH-quinone oxidoreductase subunit A (Rhodopseudomonas palustris (strain HaA2)).